The sequence spans 581 residues: Laccase-2 (581 aa).

The N-terminal stretch at 1–19 (MKYSTVFTALTALFAQASA) is a signal peptide. Plastocyanin-like domains lie at 74-191 (SVEN…GPAT) and 197-353 (DVGA…YDSS). 3 N-linked (GlcNAc...) asparagine glycosylation sites follow: Asn77, Asn93, and Asn120. Cu cation is bound by residues His125, His127, His169, and His171. Cysteines 146 and 562 form a disulfide. Residues Asn232, Asn283, Asn343, Asn408, Asn427, and Asn441 are each glycosylated (N-linked (GlcNAc...) asparagine). The 135-residue stretch at 413-547 (LLDWSSPTTL…AMQFVESQSS (135 aa)) folds into the Plastocyanin-like 3 domain. Positions 464, 467, 469, 526, 527, 528, and 532 each coordinate Cu cation.

This sequence belongs to the multicopper oxidase family. Cu cation serves as cofactor.

The protein localises to the secreted. The enzyme catalyses 4 hydroquinone + O2 = 4 benzosemiquinone + 2 H2O. Its function is as follows. Lignin degradation and detoxification of lignin-derived products. The sequence is that of Laccase-2 (lcc2) from Botryotinia fuckeliana (Noble rot fungus).